Here is a 439-residue protein sequence, read N- to C-terminus: Damage-control phosphatase ARMT1 (439 aa).

At Ala2 the chain carries N-acetylalanine. Phosphoserine is present on Ser4. Lys40 is subject to N6-acetyllysine. 2 residues coordinate Mn(2+): Asp251 and Asn252. 251-252 (DN) contributes to the substrate binding site. S-adenosyl-L-methionine is bound by residues Glu256 and Asp289. Asp289 serves as a coordination point for Mn(2+). Substrate contacts are provided by residues 365-369 (DLNYR) and Lys402. A Subfamily III RTxK motif motif is present at residues 399-402 (RTLK).

This sequence belongs to the damage-control phosphatase family. Sugar phosphate phosphatase III subfamily. Requires Mn(2+) as cofactor. It depends on Ni(2+) as a cofactor. Post-translationally, automethylated.

It catalyses the reaction beta-D-fructose 1-phosphate + H2O = D-fructose + phosphate. The catalysed reaction is beta-D-fructose 6-phosphate = dihydroxyacetone + D-glyceraldehyde 3-phosphate. The enzyme catalyses L-glutamyl-[protein] + S-adenosyl-L-methionine = [protein]-L-glutamate 5-O-methyl ester + S-adenosyl-L-homocysteine. Functionally, metal-dependent phosphatase that shows phosphatase activity against several substrates, including fructose-1-phosphate and fructose-6-phosphate. Its preference for fructose-1-phosphate, a strong glycating agent that causes DNA damage rather than a canonical yeast metabolite, suggests a damage-control function in hexose phosphate metabolism. Has also been shown to have O-methyltransferase activity that methylates glutamate residues of target proteins to form gamma-glutamyl methyl ester residues. Possibly methylates PCNA, suggesting it is involved in the DNA damage response. This Mus musculus (Mouse) protein is Damage-control phosphatase ARMT1.